The sequence spans 220 residues: Uracil-DNA glycosylase (220 aa).

Catalysis depends on Asp65, which acts as the Proton acceptor.

This sequence belongs to the uracil-DNA glycosylase (UDG) superfamily. UNG family.

The protein localises to the cytoplasm. The enzyme catalyses Hydrolyzes single-stranded DNA or mismatched double-stranded DNA and polynucleotides, releasing free uracil.. Functionally, excises uracil residues from the DNA which can arise as a result of misincorporation of dUMP residues by DNA polymerase or due to deamination of cytosine. The polypeptide is Uracil-DNA glycosylase (Phocaeicola vulgatus (strain ATCC 8482 / DSM 1447 / JCM 5826 / CCUG 4940 / NBRC 14291 / NCTC 11154) (Bacteroides vulgatus)).